Consider the following 376-residue polypeptide: Serpin B6 (376 aa).

Met-1 bears the N-acetylmethionine mark. Ser-151 is subject to Phosphoserine. The residue at position 195 (Lys-195) is an N6-acetyllysine.

The protein belongs to the serpin family. Ov-serpin subfamily. As to quaternary structure, forms a complex with the monomeric form of beta-tryptase.

The protein resides in the cytoplasm. Its function is as follows. Inhibitor of cathepsin G, kallikrein-8 and thrombin. May play an important role in the inner ear in the protection against leakage of lysosomal content during stress. May be involved in the regulation of serine proteinases present in the brain or extravasated from the blood. The chain is Serpin B6 (SERPINB6) from Pongo abelii (Sumatran orangutan).